The sequence spans 288 residues: 4-diphosphocytidyl-2-C-methyl-D-erythritol kinase (288 aa).

The active site involves K11. 95 to 105 (PVAAGMAGGSS) contacts ATP. D137 is an active-site residue.

The protein belongs to the GHMP kinase family. IspE subfamily.

It carries out the reaction 4-CDP-2-C-methyl-D-erythritol + ATP = 4-CDP-2-C-methyl-D-erythritol 2-phosphate + ADP + H(+). The protein operates within isoprenoid biosynthesis; isopentenyl diphosphate biosynthesis via DXP pathway; isopentenyl diphosphate from 1-deoxy-D-xylulose 5-phosphate: step 3/6. Functionally, catalyzes the phosphorylation of the position 2 hydroxy group of 4-diphosphocytidyl-2C-methyl-D-erythritol. The protein is 4-diphosphocytidyl-2-C-methyl-D-erythritol kinase of Lachnospira eligens (strain ATCC 27750 / DSM 3376 / VPI C15-48 / C15-B4) (Eubacterium eligens).